We begin with the raw amino-acid sequence, 244 residues long: MKYLIDLHTHTIVSGHAYTTLLENIKQASQIGIKILGTSEHGPKMPGAPHIWYFGNMNKVPRKIYDVTVLRGCEADILNSNGDLDIPERIQNELDYIIASLHDVCIEPGTIEDNTKALLNAMNNPNIDILGHTGNPMYPIDIDAVVSKAKEKNVLIEINNGSLSGSREGSYDNCKKIAQACKKKGVKVILGTDSHISFTIGNFDKVQKLLDSVDMPKELIMNTDEKKIVEYLKAKGKLKNFNLE.

Residues H8, H10, H16, H41, E74, H102, H132, D193, and H195 each coordinate Zn(2+).

It belongs to the PHP family. It depends on Zn(2+) as a cofactor.

The sequence is that of Probable phosphatase CA_C0509 from Clostridium acetobutylicum (strain ATCC 824 / DSM 792 / JCM 1419 / IAM 19013 / LMG 5710 / NBRC 13948 / NRRL B-527 / VKM B-1787 / 2291 / W).